Reading from the N-terminus, the 122-residue chain is Large ribosomal subunit protein uL14 (122 aa).

It belongs to the universal ribosomal protein uL14 family. Part of the 50S ribosomal subunit. Forms a cluster with proteins L3 and L19. In the 70S ribosome, L14 and L19 interact and together make contacts with the 16S rRNA in bridges B5 and B8.

Its function is as follows. Binds to 23S rRNA. Forms part of two intersubunit bridges in the 70S ribosome. The chain is Large ribosomal subunit protein uL14 from Chloroflexus aurantiacus (strain ATCC 29366 / DSM 635 / J-10-fl).